Consider the following 202-residue polypeptide: Probable cytochrome c oxidase subunit 3 (202 aa).

5 helical membrane-spanning segments follow: residues 30 to 50 (VVWL…YFTA), 69 to 89 (AVPV…GVFS), 101 to 121 (WYVI…YEYY), 141 to 161 (LATG…IFLL), and 178 to 198 (IVVS…FTVI).

It belongs to the cytochrome c oxidase subunit 3 family.

The protein resides in the cell membrane. It carries out the reaction 4 Fe(II)-[cytochrome c] + O2 + 8 H(+)(in) = 4 Fe(III)-[cytochrome c] + 2 H2O + 4 H(+)(out). The polypeptide is Probable cytochrome c oxidase subunit 3 (ctaE) (Mycobacterium leprae (strain TN)).